Here is a 178-residue protein sequence, read N- to C-terminus: Probable chorismate pyruvate-lyase (178 aa).

Positions 67, 105, and 164 each coordinate substrate.

This sequence belongs to the UbiC family.

It is found in the cytoplasm. It catalyses the reaction chorismate = 4-hydroxybenzoate + pyruvate. It participates in cofactor biosynthesis; ubiquinone biosynthesis. Its function is as follows. Removes the pyruvyl group from chorismate, with concomitant aromatization of the ring, to provide 4-hydroxybenzoate (4HB) for the ubiquinone pathway. The sequence is that of Probable chorismate pyruvate-lyase from Methylobacillus flagellatus (strain ATCC 51484 / DSM 6875 / VKM B-1610 / KT).